The sequence spans 148 residues: 1,4-dihydroxy-2-naphthoyl-CoA hydrolase (148 aa).

Residue Asp-15 is part of the active site.

Belongs to the 4-hydroxybenzoyl-CoA thioesterase family. DHNA-CoA hydrolase subfamily.

It catalyses the reaction 1,4-dihydroxy-2-naphthoyl-CoA + H2O = 1,4-dihydroxy-2-naphthoate + CoA + H(+). It functions in the pathway cofactor biosynthesis; phylloquinone biosynthesis. The protein operates within quinol/quinone metabolism; 1,4-dihydroxy-2-naphthoate biosynthesis; 1,4-dihydroxy-2-naphthoate from chorismate: step 7/7. In terms of biological role, catalyzes the hydrolysis of 1,4-dihydroxy-2-naphthoyl-CoA (DHNA-CoA) to 1,4-dihydroxy-2-naphthoate (DHNA), a reaction involved in phylloquinone (vitamin K1) biosynthesis. In Nostoc sp. (strain PCC 7120 / SAG 25.82 / UTEX 2576), this protein is 1,4-dihydroxy-2-naphthoyl-CoA hydrolase.